Reading from the N-terminus, the 402-residue chain is Phosphoglycerate kinase (402 aa).

Substrate-binding positions include 29-31 (DFN), Arg45, 69-72 (HLGR), Arg125, and Arg158. ATP contacts are provided by residues Lys209, Glu331, and 357–360 (GGDT).

This sequence belongs to the phosphoglycerate kinase family.

The protein resides in the cytoplasm. It catalyses the reaction (2R)-3-phosphoglycerate + ATP = (2R)-3-phospho-glyceroyl phosphate + ADP. The protein operates within carbohydrate degradation; glycolysis; pyruvate from D-glyceraldehyde 3-phosphate: step 2/5. The sequence is that of Phosphoglycerate kinase (pgk) from Helicobacter pylori (strain ATCC 700392 / 26695) (Campylobacter pylori).